Here is a 165-residue protein sequence, read N- to C-terminus: Crossover junction endodeoxyribonuclease RuvC (165 aa).

Active-site residues include Asp-7, Glu-68, and His-142. Residues Asp-7, Glu-68, and His-142 each contribute to the Mg(2+) site.

This sequence belongs to the RuvC family. In terms of assembly, homodimer which binds Holliday junction (HJ) DNA. The HJ becomes 2-fold symmetrical on binding to RuvC with unstacked arms; it has a different conformation from HJ DNA in complex with RuvA. In the full resolvosome a probable DNA-RuvA(4)-RuvB(12)-RuvC(2) complex forms which resolves the HJ. Mg(2+) is required as a cofactor.

It localises to the cytoplasm. It carries out the reaction Endonucleolytic cleavage at a junction such as a reciprocal single-stranded crossover between two homologous DNA duplexes (Holliday junction).. In terms of biological role, the RuvA-RuvB-RuvC complex processes Holliday junction (HJ) DNA during genetic recombination and DNA repair. Endonuclease that resolves HJ intermediates. Cleaves cruciform DNA by making single-stranded nicks across the HJ at symmetrical positions within the homologous arms, yielding a 5'-phosphate and a 3'-hydroxyl group; requires a central core of homology in the junction. The consensus cleavage sequence is 5'-(A/T)TT(C/G)-3'. Cleavage occurs on the 3'-side of the TT dinucleotide at the point of strand exchange. HJ branch migration catalyzed by RuvA-RuvB allows RuvC to scan DNA until it finds its consensus sequence, where it cleaves and resolves the cruciform DNA. The chain is Crossover junction endodeoxyribonuclease RuvC from Anaplasma marginale (strain Florida).